We begin with the raw amino-acid sequence, 342 residues long: Thioredoxin reductase 2, mitochondrial (342 aa).

A mitochondrion-targeting transit peptide spans Met-1 to Arg-23. FAD-binding positions include Ser-34–Ala-37, Glu-56–Gln-68, Ile-63–Ala-64, Gln-68, Asn-77, Val-110, Cys-168, Asp-311, Asp-311–Ala-320, and Arg-318–Ala-320. A disulfide bond links Cys-165 and Cys-168.

Belongs to the class-II pyridine nucleotide-disulfide oxidoreductase family. Homodimer. FAD serves as cofactor.

It is found in the mitochondrion. The enzyme catalyses [thioredoxin]-dithiol + NADP(+) = [thioredoxin]-disulfide + NADPH + H(+). Its function is as follows. Acts on mitochondrial thioredoxin 3. Implicated in the defense against oxidative stress. This chain is Thioredoxin reductase 2, mitochondrial, found in Saccharomyces cerevisiae (strain ATCC 204508 / S288c) (Baker's yeast).